The following is a 451-amino-acid chain: Methionine aminopeptidase 2-2 (451 aa).

The disordered stretch occupies residues 1-97 (MAAQVEDDVA…PRVLISDLFP (97 aa)). Over residues 19 to 28 (TKPTNGTSQP) the composition is skewed to polar residues. Acidic residues predominate over residues 35–45 (EAEDSDDDAEG). Residues 60–73 (KKKKKRKPRKKKKA) show a composition bias toward basic residues. Positions 74–83 (GTSATAGAKS) are enriched in low complexity. H204 is a binding site for substrate. D224, D235, and H304 together coordinate a divalent metal cation. H312 is a binding site for substrate. Positions 337 and 432 each coordinate a divalent metal cation.

The protein belongs to the peptidase M24A family. Methionine aminopeptidase eukaryotic type 2 subfamily. Co(2+) serves as cofactor. It depends on Zn(2+) as a cofactor. Requires Mn(2+) as cofactor. The cofactor is Fe(2+).

It localises to the cytoplasm. It carries out the reaction Release of N-terminal amino acids, preferentially methionine, from peptides and arylamides.. Cotranslationally removes the N-terminal methionine from nascent proteins. The N-terminal methionine is often cleaved when the second residue in the primary sequence is small and uncharged (Met-Ala-, Cys, Gly, Pro, Ser, Thr, or Val). This is Methionine aminopeptidase 2-2 from Leptosphaeria maculans (strain JN3 / isolate v23.1.3 / race Av1-4-5-6-7-8) (Blackleg fungus).